The primary structure comprises 427 residues: Serine hydroxymethyltransferase (427 aa).

(6S)-5,6,7,8-tetrahydrofolate contacts are provided by residues L122 and 126–128; that span reads GHL. Residue K231 is modified to N6-(pyridoxal phosphate)lysine. (6S)-5,6,7,8-tetrahydrofolate contacts are provided by residues E247 and 355-357; that span reads SPF.

The protein belongs to the SHMT family. In terms of assembly, homodimer. Pyridoxal 5'-phosphate serves as cofactor.

The protein localises to the cytoplasm. It catalyses the reaction (6R)-5,10-methylene-5,6,7,8-tetrahydrofolate + glycine + H2O = (6S)-5,6,7,8-tetrahydrofolate + L-serine. Its pathway is one-carbon metabolism; tetrahydrofolate interconversion. The protein operates within amino-acid biosynthesis; glycine biosynthesis; glycine from L-serine: step 1/1. Catalyzes the reversible interconversion of serine and glycine with tetrahydrofolate (THF) serving as the one-carbon carrier. This reaction serves as the major source of one-carbon groups required for the biosynthesis of purines, thymidylate, methionine, and other important biomolecules. Also exhibits THF-independent aldolase activity toward beta-hydroxyamino acids, producing glycine and aldehydes, via a retro-aldol mechanism. The sequence is that of Serine hydroxymethyltransferase from Crocosphaera subtropica (strain ATCC 51142 / BH68) (Cyanothece sp. (strain ATCC 51142)).